A 222-amino-acid chain; its full sequence is Coiled-coil domain-containing protein 43 homolog (222 aa).

The stretch at 80-111 (ETENKLKLTNLKLEQELKIKETTQSEINEEEK) forms a coiled coil. Disordered stretches follow at residues 102-126 (TQSE…EQKK) and 159-222 (EDNK…KRRL). 2 stretches are compositionally biased toward basic and acidic residues: residues 112–126 (YENP…EQKK) and 175–212 (RIAD…EEKK). Positions 168–222 (GENLNAKRIADEEKAKREKSKIEHQKKVQRDKEALEKQKRDEEKKKTVKKEKRRL) form a coiled coil. A compositionally biased stretch (basic residues) spans 213–222 (KTVKKEKRRL).

Belongs to the CCDC43 family.

This chain is Coiled-coil domain-containing protein 43 homolog, found in Dictyostelium discoideum (Social amoeba).